The chain runs to 201 residues: Ras-related protein Rab-9B (201 aa).

The GTP site is built by V18, G19, K20, S21, S22, D33, S34, A36, H38, and T39. S21 contributes to the Mg(2+) binding site. The Switch 1 signature appears at 31 to 42; the sequence is KFDSQAFHTIGV. A Phosphoserine modification is found at S34. The Mg(2+) site is built by T39 and D62. The Switch 2 motif lies at 64-78; that stretch reads AGQERFKSLRTPFYR. G65, N124, K125, A155, and K156 together coordinate GTP. Residues C200 and C201 are each lipidated (S-geranylgeranyl cysteine).

The protein belongs to the small GTPase superfamily. Rab family. As to quaternary structure, interacts (GTP-bound form) with SGSM1; the GDP-bound form has much lower affinity for SGSM1. The GTP-bound form but not the GDP-bound form interacts with HPS4 and the BLOC-3 complex (heterodimer of HPS1 and HPS4) but does not interact with HPS1 alone. Interacts (GTP-bound form) with NDE1. Mg(2+) is required as a cofactor. As to expression, ubiquitous.

It is found in the cell membrane. Its subcellular location is the cytoplasmic vesicle. It localises to the phagosome. The protein localises to the phagosome membrane. The catalysed reaction is GTP + H2O = GDP + phosphate + H(+). Regulated by guanine nucleotide exchange factors (GEFs) which promote the exchange of bound GDP for free GTP. Regulated by GTPase activating proteins (GAPs) which increase the GTP hydrolysis activity. Inhibited by GDP dissociation inhibitors (GDIs). In terms of biological role, the small GTPases Rab are key regulators of intracellular membrane trafficking, from the formation of transport vesicles to their fusion with membranes. Rabs cycle between an inactive GDP-bound form and an active GTP-bound form that is able to recruit to membranes different sets of downstream effectors directly responsible for vesicle formation, movement, tethering and fusion. RAB9B is involved in the transport of proteins between the endosomes and the trans Golgi network. May use NDE1/NDEL1 as an effector to interact with the dynein motor complex in order to control retrograde trafficking of RAB9-associated late endosomes to the TGN. This is Ras-related protein Rab-9B from Homo sapiens (Human).